Consider the following 125-residue polypeptide: UPF0102 protein Rpic_3463 (125 aa).

The protein belongs to the UPF0102 family.

In Ralstonia pickettii (strain 12J), this protein is UPF0102 protein Rpic_3463.